Reading from the N-terminus, the 206-residue chain is Probable GTP-binding protein EngB (206 aa).

The region spanning 23 to 197 (QGIEVAFAGR…ERVLDKWFGY (175 aa)) is the EngB-type G domain. Residues 31 to 38 (GRSNAGKS), 58 to 62 (GRTQL), 76 to 79 (DLPG), 143 to 146 (TKAD), and 176 to 178 (FSS) each bind GTP. The Mg(2+) site is built by Ser38 and Thr60.

It belongs to the TRAFAC class TrmE-Era-EngA-EngB-Septin-like GTPase superfamily. EngB GTPase family. Mg(2+) serves as cofactor.

Necessary for normal cell division and for the maintenance of normal septation. This Pseudoalteromonas atlantica (strain T6c / ATCC BAA-1087) protein is Probable GTP-binding protein EngB.